A 263-amino-acid polypeptide reads, in one-letter code: 3-methyl-2-oxobutanoate hydroxymethyltransferase (263 aa).

Residues Asp-45 and Asp-84 each contribute to the Mg(2+) site. 3-methyl-2-oxobutanoate-binding positions include 45-46, Asp-84, and Lys-112; that span reads DS. Position 114 (Glu-114) interacts with Mg(2+). The active-site Proton acceptor is Glu-181.

This sequence belongs to the PanB family. As to quaternary structure, homodecamer; pentamer of dimers. It depends on Mg(2+) as a cofactor.

It localises to the cytoplasm. It catalyses the reaction 3-methyl-2-oxobutanoate + (6R)-5,10-methylene-5,6,7,8-tetrahydrofolate + H2O = 2-dehydropantoate + (6S)-5,6,7,8-tetrahydrofolate. It functions in the pathway cofactor biosynthesis; (R)-pantothenate biosynthesis; (R)-pantoate from 3-methyl-2-oxobutanoate: step 1/2. Catalyzes the reversible reaction in which hydroxymethyl group from 5,10-methylenetetrahydrofolate is transferred onto alpha-ketoisovalerate to form ketopantoate. The sequence is that of 3-methyl-2-oxobutanoate hydroxymethyltransferase from Proteus mirabilis (strain HI4320).